A 160-amino-acid chain; its full sequence is Protein cornichon homolog 3 (160 aa).

Topologically, residues 1-10 (MAFTFAAFCY) are cytoplasmic. Residues 11–31 (MLSLVLCAALIFFAIWHIIAF) traverse the membrane as a helical segment. Over 32–72 (DELRTDFKSPIDQCNPVHARERLRNIERICFLLRKLVLPEY) the chain is Lumenal. The helical transmembrane segment at 73–93 (SIHSLFCIMFLCAQEWLTLGL) threads the bilayer. Topologically, residues 94 to 138 (NVPLLFYHFWRYFHCPADSSELAYDPPVVMNADTLSYCQKEAWCK) are cytoplasmic. Residues 139-159 (LAFYLLSFFYYLYCMIYTLVS) traverse the membrane as a helical segment. Position 160 (Ser160) is a topological domain, lumenal.

The protein belongs to the cornichon family. As to quaternary structure, acts as an auxiliary subunit for AMPA-selective glutamate receptors (AMPARs). Found in a complex with GRIA1, GRIA2, GRIA3, GRIA4, CNIH2, CACNG2, CACNG3, CACNG4, CACNG5, CACNG7 and CACNG8. As to expression, expression is up-regulated in dorsolateral prefrontal cortex of patients with schizophrenia (postmortem brain study).

The protein localises to the postsynaptic cell membrane. Functionally, regulates the trafficking and gating properties of AMPA-selective glutamate receptors (AMPARs). Promotes their targeting to the cell membrane and synapses and modulates their gating properties by regulating their rates of activation, deactivation and desensitization. The polypeptide is Protein cornichon homolog 3 (CNIH3) (Homo sapiens (Human)).